We begin with the raw amino-acid sequence, 81 residues long: Sulfur carrier protein TusA (81 aa).

Catalysis depends on Cys-19, which acts as the Cysteine persulfide intermediate.

This sequence belongs to the sulfur carrier protein TusA family.

It is found in the cytoplasm. Its function is as follows. Sulfur carrier protein which probably makes part of a sulfur-relay system. The polypeptide is Sulfur carrier protein TusA (Shewanella baltica (strain OS185)).